The following is a 170-amino-acid chain: MPTNWKDSGLRWYWVVVLVFLADQLSKQWVLSNFDLYESIQLLPVFNFTYVRNYGAAFSFLSDAGGWQRWLFTFVAVGFSVLLSVWLRQQPSKMWRLNLAYTLVIGGALGNLIDRLQHGYVVDFLDFYWNTSHFPAFNIADSAICVGAGLIILDSFVAGKDDKKSDGIKE.

The next 3 membrane-spanning stretches (helical) occupy residues 12 to 32 (WYWV…WVLS), 67 to 87 (WQRW…SVWL), and 94 to 113 (MWRL…GNLI). Active-site residues include D123 and D141. Residues 139 to 159 (IADSAICVGAGLIILDSFVAG) traverse the membrane as a helical segment.

The protein belongs to the peptidase A8 family.

It is found in the cell inner membrane. It catalyses the reaction Release of signal peptides from bacterial membrane prolipoproteins. Hydrolyzes -Xaa-Yaa-Zaa-|-(S,diacylglyceryl)Cys-, in which Xaa is hydrophobic (preferably Leu), and Yaa (Ala or Ser) and Zaa (Gly or Ala) have small, neutral side chains.. It participates in protein modification; lipoprotein biosynthesis (signal peptide cleavage). Its function is as follows. This protein specifically catalyzes the removal of signal peptides from prolipoproteins. The protein is Lipoprotein signal peptidase of Shewanella pealeana (strain ATCC 700345 / ANG-SQ1).